We begin with the raw amino-acid sequence, 273 residues long: Hydroxyethylthiazole kinase (273 aa).

A substrate-binding site is contributed by Met-47. Residues Arg-123 and Thr-169 each coordinate ATP. Gly-196 serves as a coordination point for substrate.

It belongs to the Thz kinase family. It depends on Mg(2+) as a cofactor.

It carries out the reaction 5-(2-hydroxyethyl)-4-methylthiazole + ATP = 4-methyl-5-(2-phosphooxyethyl)-thiazole + ADP + H(+). It functions in the pathway cofactor biosynthesis; thiamine diphosphate biosynthesis; 4-methyl-5-(2-phosphoethyl)-thiazole from 5-(2-hydroxyethyl)-4-methylthiazole: step 1/1. In terms of biological role, catalyzes the phosphorylation of the hydroxyl group of 4-methyl-5-beta-hydroxyethylthiazole (THZ). This chain is Hydroxyethylthiazole kinase, found in Desulfotalea psychrophila (strain LSv54 / DSM 12343).